The sequence spans 137 residues: Small ribosomal subunit protein uS12 (137 aa).

The interval Met1–Leu24 is disordered. Position 102 is a 3-methylthioaspartic acid (Asp102).

The protein belongs to the universal ribosomal protein uS12 family. In terms of assembly, part of the 30S ribosomal subunit. Contacts proteins S8 and S17. May interact with IF1 in the 30S initiation complex.

Its function is as follows. With S4 and S5 plays an important role in translational accuracy. Interacts with and stabilizes bases of the 16S rRNA that are involved in tRNA selection in the A site and with the mRNA backbone. Located at the interface of the 30S and 50S subunits, it traverses the body of the 30S subunit contacting proteins on the other side and probably holding the rRNA structure together. The combined cluster of proteins S8, S12 and S17 appears to hold together the shoulder and platform of the 30S subunit. The protein is Small ribosomal subunit protein uS12 of Pediococcus pentosaceus (strain ATCC 25745 / CCUG 21536 / LMG 10740 / 183-1w).